Here is a 257-residue protein sequence, read N- to C-terminus: Beta-fibrinogenase mucrofibrase-5 (257 aa).

An N-terminal signal peptide occupies residues 1-18; sequence MVLIRVLANLLILQLSYA. Positions 19-24 are excised as a propeptide; sequence QKSSEL. Residues 25 to 248 form the Peptidase S1 domain; the sequence is IIGGDECNIN…HLDWIKGIIA (224 aa). Disulfide bonds link Cys-31-Cys-162, Cys-49-Cys-65, Cys-97-Cys-255, Cys-141-Cys-209, Cys-173-Cys-188, and Cys-199-Cys-224. His-64 acts as the Charge relay system in catalysis. Asn-102 carries an N-linked (GlcNAc...) asparagine glycan. Residue Asp-109 is the Charge relay system of the active site. Catalysis depends on Ser-203, which acts as the Charge relay system.

This sequence belongs to the peptidase S1 family. Snake venom subfamily. As to quaternary structure, monomer. Expressed by the venom gland.

It localises to the secreted. Functionally, snake venom serine protease with strong beta-fibrinogenolytic activities, angiotensin I (AGT)-degrading activities and strong kallikrein-like activities in vitro, releasing bradykinin from kininogen (KNG1). Intravenous injection mildly lowers blood pressure in experimental rats, which may be explained by the action on angiotensin I and kininogen. Exhibits amidase activity against N-benzoyl-Pro-Phe-Arg-p-nitroanilide in vitro. The chain is Beta-fibrinogenase mucrofibrase-5 from Protobothrops mucrosquamatus (Taiwan habu).